Here is a 361-residue protein sequence, read N- to C-terminus: Phospho-N-acetylmuramoyl-pentapeptide-transferase (361 aa).

A run of 10 helical transmembrane segments spans residues 28 to 48 (LAIIITLSLSFITGPILIEFL), 74 to 94 (TMGGIMIILSSCLSTLLLADL), 99 to 119 (IWITLFGFISFGIIGFMDDYA), 133 to 153 (SKLLLQGIISFIICVLLEYLD), 168 to 188 (LSLDLGYCYIVFAIFVIVGSS), 203 to 223 (VPIAFTAGSFALISYLVGNLI), 236 to 256 (TGELTVLCAGLVGSCLGFLWF), 263 to 283 (VFMGDTGSLSLGGVLGIISVI), 288 to 308 (IVLAIVGGLFVIETASVILQV), and 338 to 358 (KVVIRFWIISVIFALIGLSSL).

It belongs to the glycosyltransferase 4 family. MraY subfamily. The cofactor is Mg(2+).

The protein localises to the cell inner membrane. It catalyses the reaction UDP-N-acetyl-alpha-D-muramoyl-L-alanyl-gamma-D-glutamyl-meso-2,6-diaminopimeloyl-D-alanyl-D-alanine + di-trans,octa-cis-undecaprenyl phosphate = di-trans,octa-cis-undecaprenyl diphospho-N-acetyl-alpha-D-muramoyl-L-alanyl-D-glutamyl-meso-2,6-diaminopimeloyl-D-alanyl-D-alanine + UMP. The protein operates within cell wall biogenesis; peptidoglycan biosynthesis. Functionally, catalyzes the initial step of the lipid cycle reactions in the biosynthesis of the cell wall peptidoglycan: transfers peptidoglycan precursor phospho-MurNAc-pentapeptide from UDP-MurNAc-pentapeptide onto the lipid carrier undecaprenyl phosphate, yielding undecaprenyl-pyrophosphoryl-MurNAc-pentapeptide, known as lipid I. This chain is Phospho-N-acetylmuramoyl-pentapeptide-transferase, found in Rickettsia africae (strain ESF-5).